We begin with the raw amino-acid sequence, 589 residues long: Phenylalanine--tRNA ligase beta subunit (589 aa).

A B5 domain is found at 302–379 (LAYRKEMVRA…IAYGYNNIQM (78 aa)). Mg(2+)-binding residues include Asp357, Asp363, Glu366, and Asp367.

This sequence belongs to the phenylalanyl-tRNA synthetase beta subunit family. Type 2 subfamily. As to quaternary structure, heterotetramer; dimer of two heterodimers formed by FARSA and FARSB. Mg(2+) is required as a cofactor.

The protein resides in the cytoplasm. It catalyses the reaction tRNA(Phe) + L-phenylalanine + ATP = L-phenylalanyl-tRNA(Phe) + AMP + diphosphate + H(+). This Homo sapiens (Human) protein is Phenylalanine--tRNA ligase beta subunit (FARSB).